The following is a 371-amino-acid chain: Chaperone protein DnaJ (371 aa).

Positions 5 to 70 constitute a J domain; that stretch reads SYYDILGVSK…KKRQAYDQFG (66 aa). Residues 139-217 form a CR-type zinc finger; the sequence is GREYKIEIPR…CGGQGLQEKR (79 aa). Positions 152, 155, 169, 172, 191, 194, 205, and 208 each coordinate Zn(2+). CXXCXGXG motif repeat units follow at residues 152–159, 169–176, 191–198, and 205–212; these read CGDCNGSG, CPDCGGSG, CPTCRGKG, and CKTCGGQG.

This sequence belongs to the DnaJ family. Homodimer. It depends on Zn(2+) as a cofactor.

The protein resides in the cytoplasm. Functionally, participates actively in the response to hyperosmotic and heat shock by preventing the aggregation of stress-denatured proteins and by disaggregating proteins, also in an autonomous, DnaK-independent fashion. Unfolded proteins bind initially to DnaJ; upon interaction with the DnaJ-bound protein, DnaK hydrolyzes its bound ATP, resulting in the formation of a stable complex. GrpE releases ADP from DnaK; ATP binding to DnaK triggers the release of the substrate protein, thus completing the reaction cycle. Several rounds of ATP-dependent interactions between DnaJ, DnaK and GrpE are required for fully efficient folding. Also involved, together with DnaK and GrpE, in the DNA replication of plasmids through activation of initiation proteins. The polypeptide is Chaperone protein DnaJ (Leptospira borgpetersenii serovar Hardjo-bovis (strain JB197)).